The following is a 518-amino-acid chain: Lycopene epsilon cyclase, chloroplastic (518 aa).

NAD(+) is bound at residue leucine 100–proline 128. A run of 2 helical transmembrane segments spans residues phenylalanine 435–phenylalanine 455 and phenylalanine 469–isoleucine 489.

Belongs to the lycopene cyclase family. In terms of tissue distribution, expressed in leaves and roots. Detected in flower buds and lips.

It is found in the plastid. The protein resides in the chloroplast membrane. The enzyme catalyses a carotenoid psi-end group = a carotenoid epsilon-end group. Its pathway is carotenoid biosynthesis; alpha-zeacarotene biosynthesis. It functions in the pathway carotenoid biosynthesis; delta-carotene biosynthesis. Functionally, catalyzes the single epsilon-cyclization reaction which converts lycopene to delta-carotene and neurosporene to alpha-zeacarotene. Required for lutein biosynthesis. The sequence is that of Lycopene epsilon cyclase, chloroplastic from Oncidium hybrid cultivar (Orchid).